The sequence spans 280 residues: Endochitinase A (280 aa).

Positions 1 to 25 (MANAPRILALGLLALLCAAAGPAAA) are cleaved as a signal peptide. The 35-residue stretch at 26–60 (QNCGCQPNFCCSKFGYCGTTDAYCGDGCQSGPCRS) folds into the Chitin-binding type-1 domain. Intrachain disulfides connect C28–C36, C30–C42, C35–C49, and C53–C58. Residues 61 to 77 (GGGGGGGGGGGGGGSGG) form a hinge region (poly-Gly) region. Residues 78–280 (ANVANVVTDA…RVDPGPNLTC (203 aa)) are catalytic. The cysteines at positions 100 and 149 are disulfide-linked. The Proton donor role is filled by E144. Residue N155 is glycosylated (N-linked (GlcNAc...) asparagine). 2 disulfides stabilise this stretch: C161–C170 and C248–C280. Residue N277 is glycosylated (N-linked (GlcNAc...) asparagine).

This sequence belongs to the glycosyl hydrolase 19 family. Chitinase class IV subfamily.

The protein localises to the secreted. It catalyses the reaction Random endo-hydrolysis of N-acetyl-beta-D-glucosaminide (1-&gt;4)-beta-linkages in chitin and chitodextrins.. With respect to regulation, inactivated by l-ethyl-3-(3-dimethylaminopropyl)carbodiimide (EDC) in the absence of exogenous nucleophiles (e.g. GlcNAc4, GlcNAc3 and GlcNAc2). Not inhibited by tetra-N-acetylchitopentaose or modified chitotetraose substrate TMG-chitotriomycin-pMP, containing a free, non-acetylated glucosaminyl residue or a N-trimethylamino glucosamine (TMG) residue at the non-reducing terminus, respectively. In terms of biological role, defense against chitin-containing fungal pathogens. Hydrolyzes glycol chitin and tetra-N-acetylchitotetraose in vitro. Its action is countered by fungal polyglycine hydrolases and fungalysin, that cleave the chitin-binding domain from the protein. This Zea mays (Maize) protein is Endochitinase A.